The sequence spans 309 residues: Probable nitrogen assimilation transcriptional activator (309 aa).

Positions 1 to 57 constitute an HTH lysR-type domain; sequence MRLEQLQAALRVAETGSFQEAAQKVGCNQSTISRQVKGLEDELGIALFRRQGRMKLT. Residues 18 to 37 constitute a DNA-binding region (H-T-H motif); the sequence is FQEAAQKVGCNQSTISRQVK.

The protein belongs to the LysR transcriptional regulatory family.

In terms of biological role, seems to regulate utilization of fixed nitrogen by controlling the expression of a certain gene(s) involved in nitrogen metabolism. This chain is Probable nitrogen assimilation transcriptional activator (ntcB), found in Synechococcus elongatus (strain ATCC 33912 / PCC 7942 / FACHB-805) (Anacystis nidulans R2).